A 440-amino-acid chain; its full sequence is MSRRDVVLTNVTVVQLRRDRCPCPCPCPCPCPCPVIRPPPPKLEDPPPTVEEQPPPPPPPPPPPPPPPPPPPPQIEPDKFEEAPPPPPPPPPPPPPPPPPLQKPARELTVGINGFGRIGRLVLRVCMEKGIRVVAVNDPFIDPEYMVYMFKYDSTHGRYKGNVEHKNGQLVVDNLEINTYQCKDPKEIPWSSIGNPYVVECTGVYLSIEAASAHISSGARRVVVTAPSPDAPMFVMGVNEKDYNPGSMTIVSNASCTTNCLAPLAKVIHENFGIVEGLMTTVHSYTATQKTVDGPSKKDWRGGRGAHQNIIPSSTGAAKAVGKVIPELKGKLTGMAFRVPTPNVSVVDLTCRLAKPASYSAITEAVKAAAKGPLAGILAYTEDQVVSTDFNGNPHSSIFDAKAGIALNDNFVKLVAWYDNEYGYSNRVVDLLRYMFSREK.

The tract at residues 1–105 (MSRRDVVLTN…PPPPPLQKPA (105 aa)) is testis-specific N-terminal extension. Pro residues-rich tracts occupy residues 40-75 (PPKL…PPQI) and 83-102 (APPP…PPLQ). The disordered stretch occupies residues 40 to 106 (PPKLEDPPPT…PPPPLQKPAR (67 aa)). Residues 117 to 118 (RI), aspartate 138, lysine 183, tyrosine 205, and threonine 225 each bind NAD(+). D-glyceraldehyde 3-phosphate is bound by residues 255 to 257 (SCT), threonine 286, 315 to 316 (TG), and arginine 338. Cysteine 256 functions as the Nucleophile in the catalytic mechanism. At serine 358 the chain carries Phosphoserine. Asparagine 420 contacts NAD(+).

Belongs to the glyceraldehyde-3-phosphate dehydrogenase family. In terms of assembly, homotetramer. In terms of tissue distribution, testis specific.

The protein resides in the cytoplasm. The catalysed reaction is D-glyceraldehyde 3-phosphate + phosphate + NAD(+) = (2R)-3-phospho-glyceroyl phosphate + NADH + H(+). It functions in the pathway carbohydrate degradation; glycolysis; pyruvate from D-glyceraldehyde 3-phosphate: step 1/5. Its function is as follows. May play an important role in regulating the switch between different pathways for energy production during spermiogenesis and in the spermatozoon. Required for sperm motility and male fertility. This Mus musculus (Mouse) protein is Glyceraldehyde-3-phosphate dehydrogenase, testis-specific (Gapdhs).